Consider the following 156-residue polypeptide: Small ribosomal subunit protein uS7 (156 aa).

The protein belongs to the universal ribosomal protein uS7 family. Part of the 30S ribosomal subunit. Contacts proteins S9 and S11.

In terms of biological role, one of the primary rRNA binding proteins, it binds directly to 16S rRNA where it nucleates assembly of the head domain of the 30S subunit. Is located at the subunit interface close to the decoding center, probably blocks exit of the E-site tRNA. This chain is Small ribosomal subunit protein uS7, found in Syntrophobacter fumaroxidans (strain DSM 10017 / MPOB).